A 209-amino-acid chain; its full sequence is Inorganic pyrophosphatase (209 aa).

Substrate contacts are provided by Lys38, Arg52, and Tyr64. The Mg(2+) site is built by Asp92, Asp97, and Asp130. Tyr167 serves as a coordination point for substrate.

This sequence belongs to the PPase family. As to quaternary structure, homohexamer. Mg(2+) serves as cofactor.

It localises to the cytoplasm. The enzyme catalyses diphosphate + H2O = 2 phosphate + H(+). In terms of biological role, catalyzes the hydrolysis of inorganic pyrophosphate (PPi) forming two phosphate ions. The chain is Inorganic pyrophosphatase from Chlamydia muridarum (strain MoPn / Nigg).